The sequence spans 388 residues: Succinate--CoA ligase [ADP-forming] subunit beta (388 aa).

The ATP-grasp domain occupies 9–244; that stretch reads KEIFRSMGVA…LEEEDPKEIE (236 aa). Residues lysine 46, 53-55, glutamate 99, cysteine 102, and glutamate 107 each bind ATP; that span reads GRG. Residues asparagine 199 and aspartate 213 each coordinate Mg(2+). Substrate is bound by residues asparagine 264 and 321–323; that span reads GIM.

The protein belongs to the succinate/malate CoA ligase beta subunit family. In terms of assembly, heterotetramer of two alpha and two beta subunits. Mg(2+) serves as cofactor.

It catalyses the reaction succinate + ATP + CoA = succinyl-CoA + ADP + phosphate. The enzyme catalyses GTP + succinate + CoA = succinyl-CoA + GDP + phosphate. The protein operates within carbohydrate metabolism; tricarboxylic acid cycle; succinate from succinyl-CoA (ligase route): step 1/1. Its function is as follows. Succinyl-CoA synthetase functions in the citric acid cycle (TCA), coupling the hydrolysis of succinyl-CoA to the synthesis of either ATP or GTP and thus represents the only step of substrate-level phosphorylation in the TCA. The beta subunit provides nucleotide specificity of the enzyme and binds the substrate succinate, while the binding sites for coenzyme A and phosphate are found in the alpha subunit. This Staphylococcus haemolyticus (strain JCSC1435) protein is Succinate--CoA ligase [ADP-forming] subunit beta.